The following is an 874-amino-acid chain: Leucine--tRNA ligase (874 aa).

The 'HIGH' region signature appears at 43–53 (PYPSGRIHIGH). A 'KMSKS' region motif is present at residues 630 to 634 (KMSKS). ATP is bound at residue K633.

Belongs to the class-I aminoacyl-tRNA synthetase family.

It is found in the cytoplasm. It catalyses the reaction tRNA(Leu) + L-leucine + ATP = L-leucyl-tRNA(Leu) + AMP + diphosphate. This is Leucine--tRNA ligase from Bradyrhizobium sp. (strain BTAi1 / ATCC BAA-1182).